Reading from the N-terminus, the 155-residue chain is D-aminoacyl-tRNA deacylase (155 aa).

Positions 147–148 (GP) match the Gly-cisPro motif, important for rejection of L-amino acids motif.

It belongs to the DTD family. Homodimer.

The protein resides in the cytoplasm. The catalysed reaction is glycyl-tRNA(Ala) + H2O = tRNA(Ala) + glycine + H(+). The enzyme catalyses a D-aminoacyl-tRNA + H2O = a tRNA + a D-alpha-amino acid + H(+). Its function is as follows. An aminoacyl-tRNA editing enzyme that deacylates mischarged D-aminoacyl-tRNAs. Also deacylates mischarged glycyl-tRNA(Ala), protecting cells against glycine mischarging by AlaRS. Acts via tRNA-based rather than protein-based catalysis; rejects L-amino acids rather than detecting D-amino acids in the active site. By recycling D-aminoacyl-tRNA to D-amino acids and free tRNA molecules, this enzyme counteracts the toxicity associated with the formation of D-aminoacyl-tRNA entities in vivo and helps enforce protein L-homochirality. The polypeptide is D-aminoacyl-tRNA deacylase (Corynebacterium urealyticum (strain ATCC 43042 / DSM 7109)).